The sequence spans 428 residues: Probable mannosyltransferase YUR1 (428 aa).

The Cytoplasmic portion of the chain corresponds to 1–3 (MAK). Residues 4 to 24 (GGSLYIVGIFLPIWTFMIYIF) form a helical; Signal-anchor for type II membrane protein membrane-spanning segment. The tract at residues 25 to 88 (GKELFLIRKY…TRQNDSDSFH (64 aa)) is stem region. Residues 25–428 (GKELFLIRKY…YFLKEEQDEI (404 aa)) lie on the Lumenal side of the membrane. N-linked (GlcNAc...) asparagine glycans are attached at residues Asn77, Asn82, Asn92, and Asn167. The tract at residues 89 to 428 (LRENATILML…YFLKEEQDEI (340 aa)) is catalytic. Glu313 functions as the Nucleophile in the catalytic mechanism. Asn414 carries an N-linked (GlcNAc...) asparagine glycan.

This sequence belongs to the glycosyltransferase 15 family.

It is found in the golgi apparatus membrane. The protein operates within protein modification; protein glycosylation. Its function is as follows. Possible glycosyltransferase involved in N-linked glycosylation. Transfers an alpha-D-mannosyl residue from GDP-mannose into lipid-linked oligosaccharide, forming an alpha-(1-&gt;2)-D-mannosyl-D-mannose linkage. The protein is Probable mannosyltransferase YUR1 (YUR1) of Saccharomyces cerevisiae (strain ATCC 204508 / S288c) (Baker's yeast).